We begin with the raw amino-acid sequence, 607 residues long: MGLFGSFGARNKATPQVPPGAVAKAPEGTPKGPETNDQPDMDSSRLSLEARNEKEIEQHPNQVTADAHLGVQKVEAAALVWSKKAVWATYAWIWVCFFLLALQSGISGNVINNAYSGFMSAPQISTANILSSIIGGVLKLPIAKILNLWGRAEGFLVFVGVYTIGLIILAACNGPDSYAAGYVLFWIGYDAIYLILDVFVADTSGLRNRAFTFAFASTPFICTAFTAPLAASSFLRMTTWRWAYGAFAIIMPVALAPLAVVFKRYQLKAEKMGLYVRQPSGRTWAQSVAHYIHEFDIIGAFLLMAAWVLLLLPFSLASNGRAEYKSAAFIAMVIIGFCLFFAFAAWEKWFARVHFINYELLKQRTVLGACVMAATLYFSFYCWDLYFYNFCTVVYNLNAAMTGYMTQIYNVGSCFWGVVFGLWVRWTKHFKHTCLFFGLPLMILGAGLMIHFRGQSDDIGYVIMCQIFIAFGGGTLVIGEQMAVMASANREGVPMMLSFIGLFSSLGGAIGYAVAAAIYTNVFPGALESRLPADLKSNATSIYMGGYTVQQTYPMGSAARDAINYAWGRSQRFGAVAATCILILGIPAIAVWKNYNVNKHQNKGVMI.

Positions 1–46 (MGLFGSFGARNKATPQVPPGAVAKAPEGTPKGPETNDQPDMDSSRL) are disordered. 13 helical membrane passes run 86 to 106 (VWATYAWIWVCFFLLALQSGI), 129 to 149 (ILSSIIGGVLKLPIAKILNLW), 152 to 172 (AEGFLVFVGVYTIGLIILAAC), 180 to 200 (AGYVLFWIGYDAIYLILDVFV), 210 to 230 (AFTFAFASTPFICTAFTAPLA), 242 to 262 (WAYGAFAIIMPVALAPLAVVF), 297 to 317 (IIGAFLLMAAWVLLLLPFSLA), 326 to 346 (SAAFIAMVIIGFCLFFAFAAW), 367 to 387 (LGACVMAATLYFSFYCWDLYF), 404 to 424 (YMTQIYNVGSCFWGVVFGLWV), 432 to 452 (HTCLFFGLPLMILGAGLMIHF), 459 to 479 (IGYVIMCQIFIAFGGGTLVIG), and 499 to 519 (FIGLFSSLGGAIGYAVAAAIY). The N-linked (GlcNAc...) asparagine glycan is linked to Asn-538. The chain crosses the membrane as a helical span at residues 573–593 (FGAVAATCILILGIPAIAVWK).

The protein belongs to the major facilitator superfamily.

It is found in the cell membrane. Major facilitator transporter involved in ferrichrome (FC) uptake. The sequence is that of Siderochrome iron transporter 2 from Aspergillus fumigatus (strain ATCC MYA-4609 / CBS 101355 / FGSC A1100 / Af293) (Neosartorya fumigata).